Here is a 398-residue protein sequence, read N- to C-terminus: Stomatin-like protein 1 (398 aa).

The short motif at 6 to 10 (GYRAL) is the Tyrosine-type lysosomal sorting signal element. Residue S28 is modified to Phosphoserine. A helical; Signal-anchor for type III membrane protein membrane pass occupies residues 58-78 (LISFLGFLLLLVTFPISGWFA). Topologically, residues 79–398 (LKIVPTYERM…KLEAVLRALK (320 aa)) are cytoplasmic. In terms of domain architecture, SCP2 spans 287-398 (KQPLAEGLLT…KLEAVLRALK (112 aa)).

It belongs to the band 7/mec-2 family. As to quaternary structure, interacts with STOM; may redistribute STOM from the plasma membrane to late endosomes. Interacts with FBXW7 isoform 3 and CDK2. In terms of tissue distribution, ubiquitously expressed at low levels. Expression is highest in brain.

It localises to the membrane. The protein resides in the late endosome membrane. It is found in the membrane raft. Its subcellular location is the cell membrane. The protein localises to the cytoplasmic vesicle. May play a role in cholesterol transfer to late endosomes. May play a role in modulating membrane acid-sensing ion channels. Can specifically inhibit proton-gated current of ASIC1 isoform 1. Can increase inactivation speed of ASIC3. May be involved in regulation of proton sensing in dorsal root ganglions. May play a role in protecting FBXW7 isoform 3 from degradation. In Homo sapiens (Human), this protein is Stomatin-like protein 1 (STOML1).